A 452-amino-acid polypeptide reads, in one-letter code: Trigger factor (452 aa).

Residues 171-256 (GDRVTVSFKG…ATKLEAPQET (86 aa)) enclose the PPIase FKBP-type domain.

The protein belongs to the FKBP-type PPIase family. Tig subfamily.

Its subcellular location is the cytoplasm. It carries out the reaction [protein]-peptidylproline (omega=180) = [protein]-peptidylproline (omega=0). Its function is as follows. Involved in protein export. Acts as a chaperone by maintaining the newly synthesized protein in an open conformation. Functions as a peptidyl-prolyl cis-trans isomerase. The protein is Trigger factor of Rhodopseudomonas palustris (strain ATCC BAA-98 / CGA009).